The sequence spans 695 residues: Probable pre-mRNA-splicing factor ATP-dependent RNA helicase DEAH9 (695 aa).

One can recognise a Helicase ATP-binding domain in the interval 58-223 (LYLVENHATT…FNSSKKRHAP (166 aa)). 71–78 (GETGSGKT) provides a ligand contact to ATP. The short motif at 170-173 (DEAH) is the DEAH box element. The Helicase C-terminal domain occupies 261–438 (SVVSTILLIN…STVIQLKALG (178 aa)).

This sequence belongs to the DEAD box helicase family. DEAH subfamily. DDX35 sub-subfamily.

The enzyme catalyses ATP + H2O = ADP + phosphate + H(+). Functionally, may be involved in pre-mRNA splicing. The sequence is that of Probable pre-mRNA-splicing factor ATP-dependent RNA helicase DEAH9 from Arabidopsis thaliana (Mouse-ear cress).